The following is a 391-amino-acid chain: Serine acetyltransferase 3, mitochondrial (391 aa).

2 disordered regions span residues Lys-40–Glu-82 and Val-353–Leu-375. Over residues Ser-45–Met-56 the composition is skewed to pro residues.

Belongs to the transferase hexapeptide repeat family. Homomultimer. Interacts with OASC. Component of the cysteine synthase complex (CSC) composed of two OAS-TL dimers and one SAT hexamer. Ubiquitous with higher levels in leaves and siliques. Localized in vascular tissues, particularly in phloem.

Its subcellular location is the mitochondrion. The catalysed reaction is L-serine + acetyl-CoA = O-acetyl-L-serine + CoA. It functions in the pathway amino-acid biosynthesis; L-cysteine biosynthesis; L-cysteine from L-serine: step 1/2. In Arabidopsis thaliana (Mouse-ear cress), this protein is Serine acetyltransferase 3, mitochondrial (SAT3).